The chain runs to 387 residues: 4-hydroxy-3-methylbut-2-en-1-yl diphosphate synthase (flavodoxin) (387 aa).

[4Fe-4S] cluster is bound by residues Cys-293, Cys-296, Cys-328, and Glu-335.

This sequence belongs to the IspG family. [4Fe-4S] cluster serves as cofactor.

It carries out the reaction (2E)-4-hydroxy-3-methylbut-2-enyl diphosphate + oxidized [flavodoxin] + H2O + 2 H(+) = 2-C-methyl-D-erythritol 2,4-cyclic diphosphate + reduced [flavodoxin]. The protein operates within isoprenoid biosynthesis; isopentenyl diphosphate biosynthesis via DXP pathway; isopentenyl diphosphate from 1-deoxy-D-xylulose 5-phosphate: step 5/6. In terms of biological role, converts 2C-methyl-D-erythritol 2,4-cyclodiphosphate (ME-2,4cPP) into 1-hydroxy-2-methyl-2-(E)-butenyl 4-diphosphate. The chain is 4-hydroxy-3-methylbut-2-en-1-yl diphosphate synthase (flavodoxin) from Treponema denticola (strain ATCC 35405 / DSM 14222 / CIP 103919 / JCM 8153 / KCTC 15104).